A 100-amino-acid chain; its full sequence is Urease subunit gamma (100 aa).

It belongs to the urease gamma subunit family. Heterotrimer of UreA (gamma), UreB (beta) and UreC (alpha) subunits. Three heterotrimers associate to form the active enzyme.

Its subcellular location is the cytoplasm. It carries out the reaction urea + 2 H2O + H(+) = hydrogencarbonate + 2 NH4(+). Its pathway is nitrogen metabolism; urea degradation; CO(2) and NH(3) from urea (urease route): step 1/1. This Prochlorococcus marinus (strain MIT 9312) protein is Urease subunit gamma.